Reading from the N-terminus, the 293-residue chain is Autophagy-related protein 36 (293 aa).

2 stretches are compositionally biased toward polar residues: residues 98 to 108 (ISSDSNKNSPP) and 260 to 273 (GETL…ASSS). Disordered regions lie at residues 98–121 (ISSD…NIRS) and 250–273 (SRSR…ASSS).

Interacts with PEX3, ATG8 and ATG11.

The protein localises to the peroxisome. Required for autophagic breakdown of peroxisomes, called pexophagy, through linking peroxisomes to the autophagy apparatus. Involved in regulation of the glyoxylate cycle. The chain is Autophagy-related protein 36 (ATG36) from Saccharomyces cerevisiae (strain ATCC 204508 / S288c) (Baker's yeast).